A 201-amino-acid chain; its full sequence is 3-isopropylmalate dehydratase small subunit (201 aa).

It belongs to the LeuD family. LeuD type 1 subfamily. As to quaternary structure, heterodimer of LeuC and LeuD.

The enzyme catalyses (2R,3S)-3-isopropylmalate = (2S)-2-isopropylmalate. It functions in the pathway amino-acid biosynthesis; L-leucine biosynthesis; L-leucine from 3-methyl-2-oxobutanoate: step 2/4. In terms of biological role, catalyzes the isomerization between 2-isopropylmalate and 3-isopropylmalate, via the formation of 2-isopropylmaleate. In Klebsiella pneumoniae (strain 342), this protein is 3-isopropylmalate dehydratase small subunit.